A 320-amino-acid polypeptide reads, in one-letter code: Bifunctional protein FolD 2 (320 aa).

Residues 173–175 (GRS) and Ile-242 each bind NADP(+).

Belongs to the tetrahydrofolate dehydrogenase/cyclohydrolase family. As to quaternary structure, homodimer.

The enzyme catalyses (6R)-5,10-methylene-5,6,7,8-tetrahydrofolate + NADP(+) = (6R)-5,10-methenyltetrahydrofolate + NADPH. It carries out the reaction (6R)-5,10-methenyltetrahydrofolate + H2O = (6R)-10-formyltetrahydrofolate + H(+). It functions in the pathway one-carbon metabolism; tetrahydrofolate interconversion. Functionally, catalyzes the oxidation of 5,10-methylenetetrahydrofolate to 5,10-methenyltetrahydrofolate and then the hydrolysis of 5,10-methenyltetrahydrofolate to 10-formyltetrahydrofolate. This chain is Bifunctional protein FolD 2, found in Rubrobacter xylanophilus (strain DSM 9941 / JCM 11954 / NBRC 16129 / PRD-1).